A 257-amino-acid chain; its full sequence is tRNA pseudouridine synthase A (257 aa).

Catalysis depends on D52, which acts as the Nucleophile. Residue Y111 participates in substrate binding.

The protein belongs to the tRNA pseudouridine synthase TruA family. As to quaternary structure, homodimer.

The catalysed reaction is uridine(38/39/40) in tRNA = pseudouridine(38/39/40) in tRNA. Its function is as follows. Formation of pseudouridine at positions 38, 39 and 40 in the anticodon stem and loop of transfer RNAs. This Dinoroseobacter shibae (strain DSM 16493 / NCIMB 14021 / DFL 12) protein is tRNA pseudouridine synthase A.